The sequence spans 358 residues: SPbeta prophage-derived probable integrase/recombinase YopP (358 aa).

Residues Asn23–Glu114 form the Core-binding (CB) domain. In terms of domain architecture, Tyr recombinase spans Lys137–Met319. Catalysis depends on residues Arg178, Lys206, His268, and His295. Catalysis depends on Tyr304, which acts as the O-(3'-phospho-DNA)-tyrosine intermediate.

The protein belongs to the 'phage' integrase family.

Functionally, probable recombinase that does not seem to have a role in chromosome dimer resolution per se but rather may have some facilitative role during chromosome partitioning in general. The polypeptide is SPbeta prophage-derived probable integrase/recombinase YopP (yopP) (Bacillus subtilis (strain 168)).